The primary structure comprises 107 residues: Nucleoid-associated protein XF_1808 (107 aa).

This sequence belongs to the YbaB/EbfC family. In terms of assembly, homodimer.

It is found in the cytoplasm. The protein resides in the nucleoid. Functionally, binds to DNA and alters its conformation. May be involved in regulation of gene expression, nucleoid organization and DNA protection. The chain is Nucleoid-associated protein XF_1808 from Xylella fastidiosa (strain 9a5c).